Reading from the N-terminus, the 397-residue chain is Translocase of chloroplast 34 homolog, chloroplastic (397 aa).

Residues 1 to 72 (MAQPPRPAEE…SQPWAGLNRL (72 aa)) form a disordered region. 2 stretches are compositionally biased toward acidic residues: residues 10 to 32 (EYDDDVQEDEDELKEGELDDDES) and 44 to 63 (AGDEEAEDDEQDEEDGDEDS). The region spanning 90-321 (RKQLTVLLLG…YKYHPRLSSK (232 aa)) is the AIG1-type G domain. Positions 99–106 (GKSSVGKS) are G1. Residues 102–107 (SVGKSS) and 121–126 (QAFKLQ) contribute to the GTP site. Ser106 lines the Mg(2+) pocket. The homodimerization stretch occupies residues 121 to 124 (QAFK). Positions 126-130 (QADTD) are G2. Positions 155–158 (DTCG) are G3. The homodimerization stretch occupies residues 193–198 (RLDLYR). Residues 227-230 (THAN) form a G4 region. GTP contacts are provided by residues His228 and 271-272 (EN). The interval 271 to 273 (ENS) is G5. The helical transmembrane segment at 329–349 (LLPVAIAAEVLFYRRFLHPRL) threads the bilayer. The AKR2A-binding sequence (ABS) required for chloroplast outer envelope membrane targeting motif lies at 350–358 (DDNQRRVER).

Belongs to the TRAFAC class TrmE-Era-EngA-EngB-Septin-like GTPase superfamily. AIG1/Toc34/Toc159-like paraseptin GTPase family. TOC34 subfamily. As to quaternary structure, homodimer, heterodimer with other TOC proteins, and monomer. Part of the TOC core complex that includes 1 protein for the specific recognition of transit peptides surrounded by a ring composed of four proteins forming translocation channels, and four to five GTP-binding proteins providing energy. This core complex can interact with components of the TIC complex to form a larger import complex. Interacts with ARSA1. The cofactor is Mg(2+).

The protein resides in the plastid. It localises to the chloroplast outer membrane. Its function is as follows. GTPase involved in protein precursor import into chloroplasts. Seems to recognize chloroplast-destined precursor proteins and regulate their presentation to the translocation channel through GTP hydrolysis. Functions as an essential component of the outer chloroplast membrane translocon (TOC) complex, which, in turn, catalyzes the import of nucleus-encoded precursor polypeptides from the cytoplasm to the chloroplast. In Chlamydomonas reinhardtii (Chlamydomonas smithii), this protein is Translocase of chloroplast 34 homolog, chloroplastic.